The sequence spans 173 residues: Crossover junction endodeoxyribonuclease RuvC (173 aa).

Catalysis depends on residues D8, E67, and D139. Mg(2+) contacts are provided by D8, E67, and D139.

This sequence belongs to the RuvC family. In terms of assembly, homodimer which binds Holliday junction (HJ) DNA. The HJ becomes 2-fold symmetrical on binding to RuvC with unstacked arms; it has a different conformation from HJ DNA in complex with RuvA. In the full resolvosome a probable DNA-RuvA(4)-RuvB(12)-RuvC(2) complex forms which resolves the HJ. Mg(2+) is required as a cofactor.

It localises to the cytoplasm. It carries out the reaction Endonucleolytic cleavage at a junction such as a reciprocal single-stranded crossover between two homologous DNA duplexes (Holliday junction).. In terms of biological role, the RuvA-RuvB-RuvC complex processes Holliday junction (HJ) DNA during genetic recombination and DNA repair. Endonuclease that resolves HJ intermediates. Cleaves cruciform DNA by making single-stranded nicks across the HJ at symmetrical positions within the homologous arms, yielding a 5'-phosphate and a 3'-hydroxyl group; requires a central core of homology in the junction. The consensus cleavage sequence is 5'-(A/T)TT(C/G)-3'. Cleavage occurs on the 3'-side of the TT dinucleotide at the point of strand exchange. HJ branch migration catalyzed by RuvA-RuvB allows RuvC to scan DNA until it finds its consensus sequence, where it cleaves and resolves the cruciform DNA. This chain is Crossover junction endodeoxyribonuclease RuvC, found in Salmonella dublin (strain CT_02021853).